The chain runs to 183 residues: Ribosome-recycling factor (183 aa).

The protein belongs to the RRF family.

It is found in the cytoplasm. In terms of biological role, responsible for the release of ribosomes from messenger RNA at the termination of protein biosynthesis. May increase the efficiency of translation by recycling ribosomes from one round of translation to another. The sequence is that of Ribosome-recycling factor from Deinococcus radiodurans (strain ATCC 13939 / DSM 20539 / JCM 16871 / CCUG 27074 / LMG 4051 / NBRC 15346 / NCIMB 9279 / VKM B-1422 / R1).